The primary structure comprises 274 residues: Large ribosomal subunit protein uL2 (274 aa).

Disordered regions lie at residues 28–55 (APHA…RHVG) and 224–274 (VAMN…RRRK).

The protein belongs to the universal ribosomal protein uL2 family. In terms of assembly, part of the 50S ribosomal subunit. Forms a bridge to the 30S subunit in the 70S ribosome.

One of the primary rRNA binding proteins. Required for association of the 30S and 50S subunits to form the 70S ribosome, for tRNA binding and peptide bond formation. It has been suggested to have peptidyltransferase activity; this is somewhat controversial. Makes several contacts with the 16S rRNA in the 70S ribosome. This is Large ribosomal subunit protein uL2 from Pseudomonas putida (strain GB-1).